The sequence spans 180 residues: Colicin-E5 (180 aa).

Disordered stretches follow at residues alanine 24–glycine 143 and valine 155–glutamine 180. The span at glutamate 54–lysine 76 shows a compositional bias: basic and acidic residues. The nuclease stretch occupies residues leucine 74 to glutamine 180. Residues asparagine 106 to serine 116 are compositionally biased toward polar residues. Residues aspartate 160 to arginine 171 show a composition bias toward basic and acidic residues.

It belongs to the colicin/pyosin nuclease family.

Functionally, colicins are polypeptide toxins produced by and active against E.coli and closely related bacteria. This colicin is an endonuclease. The chain is Colicin-E5 (col) from Escherichia coli.